The chain runs to 455 residues: L-serine dehydratase 2 (455 aa).

The protein belongs to the iron-sulfur dependent L-serine dehydratase family. Requires [4Fe-4S] cluster as cofactor. Activated by post-translational modification by a system involving at least three gene products. Activation is mimicked in vitro by iron and dithiothreitol. There is considerable evidence for a free-radical activation mechanism.

The enzyme catalyses L-serine = pyruvate + NH4(+). The protein operates within carbohydrate biosynthesis; gluconeogenesis. In terms of biological role, also deaminates threonine, particularly when it is present in high concentration. The polypeptide is L-serine dehydratase 2 (sdaB) (Escherichia coli (strain K12)).